Consider the following 344-residue polypeptide: Dihydroorotase (344 aa).

Residues His-13 and His-15 each contribute to the Zn(2+) site. Substrate contacts are provided by residues 15–17 and Asn-41; that span reads HLR. Zn(2+)-binding residues include Lys-98, His-135, and His-173. At Lys-98 the chain carries N6-carboxylysine. His-135 provides a ligand contact to substrate. Substrate is bound at residue Leu-218. Asp-247 is a binding site for Zn(2+). Asp-247 is a catalytic residue. 2 residues coordinate substrate: His-251 and Ala-263.

Belongs to the metallo-dependent hydrolases superfamily. DHOase family. Class II DHOase subfamily. Homodimer. Requires Zn(2+) as cofactor.

The enzyme catalyses (S)-dihydroorotate + H2O = N-carbamoyl-L-aspartate + H(+). Its pathway is pyrimidine metabolism; UMP biosynthesis via de novo pathway; (S)-dihydroorotate from bicarbonate: step 3/3. Catalyzes the reversible cyclization of carbamoyl aspartate to dihydroorotate. This Neisseria gonorrhoeae (strain NCCP11945) protein is Dihydroorotase.